Consider the following 669-residue polypeptide: DNA ligase (669 aa).

NAD(+) contacts are provided by residues 34–38 (DAEYD), 83–84 (SL), and E114. The active-site N6-AMP-lysine intermediate is K116. The NAD(+) site is built by R137, E171, K287, and K311. Positions 405, 408, 423, and 428 each coordinate Zn(2+). The region spanning 591–669 (NIASYFAGKT…EERFLQELNK (79 aa)) is the BRCT domain.

Belongs to the NAD-dependent DNA ligase family. LigA subfamily. Requires Mg(2+) as cofactor. It depends on Mn(2+) as a cofactor.

The catalysed reaction is NAD(+) + (deoxyribonucleotide)n-3'-hydroxyl + 5'-phospho-(deoxyribonucleotide)m = (deoxyribonucleotide)n+m + AMP + beta-nicotinamide D-nucleotide.. DNA ligase that catalyzes the formation of phosphodiester linkages between 5'-phosphoryl and 3'-hydroxyl groups in double-stranded DNA using NAD as a coenzyme and as the energy source for the reaction. It is essential for DNA replication and repair of damaged DNA. The sequence is that of DNA ligase from Bacillus cytotoxicus (strain DSM 22905 / CIP 110041 / 391-98 / NVH 391-98).